The primary structure comprises 319 residues: Acetyl-coenzyme A carboxylase carboxyl transferase subunit alpha (319 aa).

Positions 36-293 constitute a CoA carboxyltransferase C-terminal domain; sequence EVERLKTKLE…HDAFLSELDR (258 aa).

It belongs to the AccA family. Acetyl-CoA carboxylase is a heterohexamer composed of biotin carboxyl carrier protein (AccB), biotin carboxylase (AccC) and two subunits each of ACCase subunit alpha (AccA) and ACCase subunit beta (AccD).

It is found in the cytoplasm. It carries out the reaction N(6)-carboxybiotinyl-L-lysyl-[protein] + acetyl-CoA = N(6)-biotinyl-L-lysyl-[protein] + malonyl-CoA. The protein operates within lipid metabolism; malonyl-CoA biosynthesis; malonyl-CoA from acetyl-CoA: step 1/1. Component of the acetyl coenzyme A carboxylase (ACC) complex. First, biotin carboxylase catalyzes the carboxylation of biotin on its carrier protein (BCCP) and then the CO(2) group is transferred by the carboxyltransferase to acetyl-CoA to form malonyl-CoA. In Dichelobacter nodosus (strain VCS1703A), this protein is Acetyl-coenzyme A carboxylase carboxyl transferase subunit alpha.